The following is a 266-amino-acid chain: 3-methyl-2-oxobutanoate hydroxymethyltransferase (266 aa).

Mg(2+)-binding residues include aspartate 45 and aspartate 84. 3-methyl-2-oxobutanoate contacts are provided by residues 45-46 (DS), aspartate 84, and lysine 113. Glutamate 115 is a Mg(2+) binding site. The active-site Proton acceptor is the glutamate 183.

This sequence belongs to the PanB family. In terms of assembly, homodecamer; pentamer of dimers. It depends on Mg(2+) as a cofactor.

The protein resides in the cytoplasm. The enzyme catalyses 3-methyl-2-oxobutanoate + (6R)-5,10-methylene-5,6,7,8-tetrahydrofolate + H2O = 2-dehydropantoate + (6S)-5,6,7,8-tetrahydrofolate. It functions in the pathway cofactor biosynthesis; (R)-pantothenate biosynthesis; (R)-pantoate from 3-methyl-2-oxobutanoate: step 1/2. Functionally, catalyzes the reversible reaction in which hydroxymethyl group from 5,10-methylenetetrahydrofolate is transferred onto alpha-ketoisovalerate to form ketopantoate. In Coxiella burnetii (strain Dugway 5J108-111), this protein is 3-methyl-2-oxobutanoate hydroxymethyltransferase.